The sequence spans 484 residues: Ribonuclease Y (484 aa).

Residues 18 to 38 (FFAFLFLIIIAFNLCLFAYLY) form a helical membrane-spanning segment. The region spanning 166–234 (SPSFLISESD…LTVRNILMND (69 aa)) is the KH domain. The 93-residue stretch at 293 to 385 (VLSHSLETAF…TQIADKLSAA (93 aa)) folds into the HD domain.

It belongs to the RNase Y family.

It is found in the cell membrane. Its function is as follows. Endoribonuclease that initiates mRNA decay. This Mycoplasma genitalium (strain ATCC 33530 / DSM 19775 / NCTC 10195 / G37) (Mycoplasmoides genitalium) protein is Ribonuclease Y.